A 473-amino-acid chain; its full sequence is Trehalose-6-phosphate synthase (473 aa).

R10 lines the D-glucose 6-phosphate pocket. 21-22 (GG) is a binding site for UDP-alpha-D-glucose. 2 residues coordinate D-glucose 6-phosphate: Y76 and D130. UDP-alpha-D-glucose contacts are provided by R262 and K267. R300 provides a ligand contact to D-glucose 6-phosphate. Residues F339 and 365–369 (LVAKE) contribute to the UDP-alpha-D-glucose site. Residues 454 to 473 (TPRSPERQQQNNVATFPKLA) form a disordered region.

It belongs to the glycosyltransferase 20 family. As to quaternary structure, homotetramer.

It catalyses the reaction D-glucose 6-phosphate + UDP-alpha-D-glucose = alpha,alpha-trehalose 6-phosphate + UDP + H(+). It functions in the pathway glycan biosynthesis; trehalose biosynthesis. Its function is as follows. Probably involved in the osmoprotection via the biosynthesis of trehalose. Catalyzes the transfer of glucose from UDP-alpha-D-glucose (UDP-Glc) to D-glucose 6-phosphate (Glc-6-P) to form trehalose-6-phosphate. Acts with retention of the anomeric configuration of the UDP-sugar donor. The chain is Trehalose-6-phosphate synthase from Salmonella paratyphi A (strain ATCC 9150 / SARB42).